Consider the following 440-residue polypeptide: Thymidine phosphorylase (440 aa).

It belongs to the thymidine/pyrimidine-nucleoside phosphorylase family. In terms of assembly, homodimer.

The catalysed reaction is thymidine + phosphate = 2-deoxy-alpha-D-ribose 1-phosphate + thymine. It functions in the pathway pyrimidine metabolism; dTMP biosynthesis via salvage pathway; dTMP from thymine: step 1/2. Its function is as follows. The enzymes which catalyze the reversible phosphorolysis of pyrimidine nucleosides are involved in the degradation of these compounds and in their utilization as carbon and energy sources, or in the rescue of pyrimidine bases for nucleotide synthesis. In Erwinia tasmaniensis (strain DSM 17950 / CFBP 7177 / CIP 109463 / NCPPB 4357 / Et1/99), this protein is Thymidine phosphorylase.